The chain runs to 35 residues: ISCQDVKQSLAPCLPYVTGRAPKPAPGCCNGINHL.

A disulfide bridge connects residues Cys13 and Cys28.

As to expression, seeds.

In terms of biological role, plant non-specific lipid-transfer proteins transfer phospholipids as well as galactolipids across membranes. May play a role in wax or cutin deposition in the cell walls of expanding epidermal cells and certain secretory tissues. Inhibits the growth of F.oxysporum and P.infestans. The sequence is that of Non-specific lipid-transfer protein 1 from Nigella sativa (Black cumin).